Consider the following 64-residue polypeptide: Prokaryotic ubiquitin-like protein Pup (64 aa).

Positions 1–37 (MAQEQTKRGGGGGEDDDLSGGAGAGQERREKLAEETD) are disordered. Residues 21–58 (GAGAGQERREKLAEETDDLLDEIDDVLEENAEDFVRAY) form an ARC ATPase binding region. Residues 24-52 (AGQERREKLAEETDDLLDEIDDVLEENAE) are a coiled coil. Gln64 bears the Deamidated glutamine mark. An Isoglutamyl lysine isopeptide (Gln-Lys) (interchain with K-? in acceptor proteins) cross-link involves residue Gln64.

The protein belongs to the prokaryotic ubiquitin-like protein family. As to quaternary structure, strongly interacts with the proteasome-associated ATPase ARC through a hydrophobic interface; the interacting region of Pup lies in its C-terminal half. There is one Pup binding site per ARC hexamer ring. Post-translationally, is modified by deamidation of its C-terminal glutamine to glutamate by the deamidase Dop, a prerequisite to the subsequent pupylation process.

The protein operates within protein degradation; proteasomal Pup-dependent pathway. Functionally, protein modifier that is covalently attached to lysine residues of substrate proteins, thereby targeting them for proteasomal degradation. The tagging system is termed pupylation. The polypeptide is Prokaryotic ubiquitin-like protein Pup (Mycobacterium sp. (strain JLS)).